A 195-amino-acid polypeptide reads, in one-letter code: UPF0314 protein RHECIAT_CH0004233 (195 aa).

A run of 4 helical transmembrane segments spans residues 15–35 (FWFVACVAVLVAQIVTEYLMG), 64–84 (WYTPSHIIHGFLFYGLGYLIL), 127–147 (GDSILNSAMDTVFMCVGFFFA), and 150–170 (APVALTVAIAIFFEIFTGYVI).

Belongs to the UPF0314 family.

Its subcellular location is the cell membrane. The chain is UPF0314 protein RHECIAT_CH0004233 from Rhizobium etli (strain CIAT 652).